The sequence spans 516 residues: Bifunctional purine biosynthesis protein PurH (516 aa).

The MGS-like domain maps to Met-1 to Val-150.

This sequence belongs to the PurH family.

The enzyme catalyses (6R)-10-formyltetrahydrofolate + 5-amino-1-(5-phospho-beta-D-ribosyl)imidazole-4-carboxamide = 5-formamido-1-(5-phospho-D-ribosyl)imidazole-4-carboxamide + (6S)-5,6,7,8-tetrahydrofolate. It carries out the reaction IMP + H2O = 5-formamido-1-(5-phospho-D-ribosyl)imidazole-4-carboxamide. It functions in the pathway purine metabolism; IMP biosynthesis via de novo pathway; 5-formamido-1-(5-phospho-D-ribosyl)imidazole-4-carboxamide from 5-amino-1-(5-phospho-D-ribosyl)imidazole-4-carboxamide (10-formyl THF route): step 1/1. Its pathway is purine metabolism; IMP biosynthesis via de novo pathway; IMP from 5-formamido-1-(5-phospho-D-ribosyl)imidazole-4-carboxamide: step 1/1. In Corynebacterium ammoniagenes (Brevibacterium ammoniagenes), this protein is Bifunctional purine biosynthesis protein PurH.